The sequence spans 22 residues: Mu-conotoxin GIIIB (22 aa).

3 disulfide bridges follow: cysteine 3/cysteine 15, cysteine 4/cysteine 20, and cysteine 10/cysteine 21. 2 positions are modified to 4-hydroxyproline; partial: proline 6 and proline 7. At proline 17 the chain carries 4-hydroxyproline. At alanine 22 the chain carries Alanine amide.

Belongs to the conotoxin M superfamily. In terms of tissue distribution, expressed by the venom duct.

It is found in the secreted. Mu-conotoxins block voltage-gated sodium channels (Nav). The chain is Mu-conotoxin GIIIB from Conus geographus (Geography cone).